The following is a 178-amino-acid chain: MSRVAKCPIVIPSGVNVQLDLQDISIKGKYGHLSRTIHQSVKIEFLNNQIIFSPRLGFSNGWAQAGTSRALVNSMIIGVSEKFSKKLQLSGVGYRVSITKDNIINMSLGYSHIITYHLPKGINAENLSPTEIIIQGIDKQLVGQIAANLRSYRTPEPYKGKGIRYSNEVVRIKEAKKK.

The protein belongs to the universal ribosomal protein uL6 family. As to quaternary structure, part of the 50S ribosomal subunit.

Functionally, this protein binds to the 23S rRNA, and is important in its secondary structure. It is located near the subunit interface in the base of the L7/L12 stalk, and near the tRNA binding site of the peptidyltransferase center. The protein is Large ribosomal subunit protein uL6 of Buchnera aphidicola subsp. Acyrthosiphon pisum (strain APS) (Acyrthosiphon pisum symbiotic bacterium).